The chain runs to 397 residues: 1-deoxy-D-xylulose 5-phosphate reductoisomerase (397 aa).

Thr12, Gly13, Ser14, Ile15, Gly38, Lys39, Asn40, and Asn126 together coordinate NADPH. Position 127 (Lys127) interacts with 1-deoxy-D-xylulose 5-phosphate. Glu128 contributes to the NADPH binding site. Residue Asp152 participates in Mn(2+) binding. 4 residues coordinate 1-deoxy-D-xylulose 5-phosphate: Ser153, Glu154, Ser188, and His211. Mn(2+) is bound at residue Glu154. Gly217 is a binding site for NADPH. Positions 224, 229, 230, and 233 each coordinate 1-deoxy-D-xylulose 5-phosphate. Glu233 provides a ligand contact to Mn(2+).

This sequence belongs to the DXR family. Mg(2+) serves as cofactor. The cofactor is Mn(2+).

It catalyses the reaction 2-C-methyl-D-erythritol 4-phosphate + NADP(+) = 1-deoxy-D-xylulose 5-phosphate + NADPH + H(+). It functions in the pathway isoprenoid biosynthesis; isopentenyl diphosphate biosynthesis via DXP pathway; isopentenyl diphosphate from 1-deoxy-D-xylulose 5-phosphate: step 1/6. Catalyzes the NADPH-dependent rearrangement and reduction of 1-deoxy-D-xylulose-5-phosphate (DXP) to 2-C-methyl-D-erythritol 4-phosphate (MEP). This Haemophilus influenzae (strain PittGG) protein is 1-deoxy-D-xylulose 5-phosphate reductoisomerase.